Reading from the N-terminus, the 257-residue chain is UPF0246 protein SO_3540 (257 aa).

This sequence belongs to the UPF0246 family.

In Shewanella oneidensis (strain ATCC 700550 / JCM 31522 / CIP 106686 / LMG 19005 / NCIMB 14063 / MR-1), this protein is UPF0246 protein SO_3540.